A 302-amino-acid chain; its full sequence is Sulfate adenylyltransferase subunit 2 (302 aa).

Belongs to the PAPS reductase family. CysD subfamily. Heterodimer composed of CysD, the smaller subunit, and CysN.

The catalysed reaction is sulfate + ATP + H(+) = adenosine 5'-phosphosulfate + diphosphate. Its pathway is sulfur metabolism; hydrogen sulfide biosynthesis; sulfite from sulfate: step 1/3. With CysN forms the ATP sulfurylase (ATPS) that catalyzes the adenylation of sulfate producing adenosine 5'-phosphosulfate (APS) and diphosphate, the first enzymatic step in sulfur assimilation pathway. APS synthesis involves the formation of a high-energy phosphoric-sulfuric acid anhydride bond driven by GTP hydrolysis by CysN coupled to ATP hydrolysis by CysD. This Citrobacter koseri (strain ATCC BAA-895 / CDC 4225-83 / SGSC4696) protein is Sulfate adenylyltransferase subunit 2.